We begin with the raw amino-acid sequence, 162 residues long: SCF ubiquitin ligase complex protein SKP1a (162 aa).

Ser2 bears the N-acetylserine mark. The segment at 100 to 162 (ILAANYLDIK…NEWCEDKGGN (63 aa)) is interaction with the F-box domain of F-box proteins. At Pro143 the chain carries 4-hydroxyproline. A glycan (O-linked (GlcNAc...) hydroxyproline) is linked at Pro143.

Belongs to the SKP1 family. In terms of assembly, multiprotein complex (SCF) with cullin and F-box-containing protein. Capable of undergoing aggregation. O-linked glycan consists of linear Gal-Gal-Fuc-Gal-GlcNAc. In terms of processing, fpaA and fpaB seem to be identically glycosylated. Glycosylation is required for nuclear enrichment. Post-translationally, hydroxylated by phyA.

It is found in the cytoplasm. The protein resides in the nucleus. This chain is SCF ubiquitin ligase complex protein SKP1a (fpaA), found in Dictyostelium discoideum (Social amoeba).